Here is a 366-residue protein sequence, read N- to C-terminus: Bacteriochlorophyll a protein (366 aa).

Positions 110, 145, 290, 297, and 298 each coordinate bacteriochlorophyll a.

In terms of assembly, homotrimer. Each subunit contains 7 molecules of bacteriochlorophyll a.

Its function is as follows. Intermediary in the transfer of excitation energy from the chlorophyll to the reaction centers. The polypeptide is Bacteriochlorophyll a protein (Prosthecochloris aestuarii).